The sequence spans 381 residues: Queuine tRNA-ribosyltransferase (381 aa).

Residue Asp92 is the Proton acceptor of the active site. Residues 92-96 (DSGGF), Asp146, Gln190, and Gly217 each bind substrate. The interval 248 to 254 (GVGRPED) is RNA binding. The active-site Nucleophile is Asp267. Residues 272-276 (TRNAR) form an RNA binding; important for wobble base 34 recognition region. Zn(2+)-binding residues include Cys305, Cys307, Cys310, and His337.

Belongs to the queuine tRNA-ribosyltransferase family. In terms of assembly, homodimer. Within each dimer, one monomer is responsible for RNA recognition and catalysis, while the other monomer binds to the replacement base PreQ1. Zn(2+) serves as cofactor.

The catalysed reaction is 7-aminomethyl-7-carbaguanine + guanosine(34) in tRNA = 7-aminomethyl-7-carbaguanosine(34) in tRNA + guanine. It participates in tRNA modification; tRNA-queuosine biosynthesis. Catalyzes the base-exchange of a guanine (G) residue with the queuine precursor 7-aminomethyl-7-deazaguanine (PreQ1) at position 34 (anticodon wobble position) in tRNAs with GU(N) anticodons (tRNA-Asp, -Asn, -His and -Tyr). Catalysis occurs through a double-displacement mechanism. The nucleophile active site attacks the C1' of nucleotide 34 to detach the guanine base from the RNA, forming a covalent enzyme-RNA intermediate. The proton acceptor active site deprotonates the incoming PreQ1, allowing a nucleophilic attack on the C1' of the ribose to form the product. After dissociation, two additional enzymatic reactions on the tRNA convert PreQ1 to queuine (Q), resulting in the hypermodified nucleoside queuosine (7-(((4,5-cis-dihydroxy-2-cyclopenten-1-yl)amino)methyl)-7-deazaguanosine). The protein is Queuine tRNA-ribosyltransferase of Xanthomonas campestris pv. campestris (strain B100).